A 31-amino-acid polypeptide reads, in one-letter code: Cytochrome b6-f complex subunit 6 (31 aa).

The chain crosses the membrane as a helical span at residues 3 to 23 (LFIGYIIFLVAFFGLATGLFL).

It belongs to the PetL family. As to quaternary structure, the 4 large subunits of the cytochrome b6-f complex are cytochrome b6, subunit IV (17 kDa polypeptide, PetD), cytochrome f and the Rieske protein, while the 4 small subunits are PetG, PetL, PetM and PetN. The complex functions as a dimer.

Its subcellular location is the plastid. The protein localises to the chloroplast thylakoid membrane. Functionally, component of the cytochrome b6-f complex, which mediates electron transfer between photosystem II (PSII) and photosystem I (PSI), cyclic electron flow around PSI, and state transitions. PetL is important for photoautotrophic growth as well as for electron transfer efficiency and stability of the cytochrome b6-f complex. The sequence is that of Cytochrome b6-f complex subunit 6 from Porphyra purpurea (Red seaweed).